Here is a 518-residue protein sequence, read N- to C-terminus: Membrane-bound lytic murein transglycosylase F (518 aa).

Positions 1 to 21 are cleaved as a signal peptide; it reads MKKLKINYLFIGILALLLAVA. Positions 22–269 are non-LT domain; it reads LWPSIPWFGK…RIEEKYLGHG (248 aa). The segment at 270–518 is LT domain; sequence DDFDYVDTRT…SRKGSEEKQN (249 aa). The active site involves Glu-314.

In the N-terminal section; belongs to the bacterial solute-binding protein 3 family. The protein in the C-terminal section; belongs to the transglycosylase Slt family.

It localises to the cell outer membrane. The enzyme catalyses Exolytic cleavage of the (1-&gt;4)-beta-glycosidic linkage between N-acetylmuramic acid (MurNAc) and N-acetylglucosamine (GlcNAc) residues in peptidoglycan, from either the reducing or the non-reducing ends of the peptidoglycan chains, with concomitant formation of a 1,6-anhydrobond in the MurNAc residue.. Its function is as follows. Murein-degrading enzyme that degrades murein glycan strands and insoluble, high-molecular weight murein sacculi, with the concomitant formation of a 1,6-anhydromuramoyl product. Lytic transglycosylases (LTs) play an integral role in the metabolism of the peptidoglycan (PG) sacculus. Their lytic action creates space within the PG sacculus to allow for its expansion as well as for the insertion of various structures such as secretion systems and flagella. The chain is Membrane-bound lytic murein transglycosylase F from Escherichia coli O6:H1 (strain CFT073 / ATCC 700928 / UPEC).